The following is a 311-amino-acid chain: tRNA N6-adenosine threonylcarbamoyltransferase (311 aa).

Positions 108 and 112 each coordinate Fe cation. Substrate is bound by residues 130-134 (LVSGG), Asp-163, Gly-176, Asp-180, and Asn-270. Asp-294 lines the Fe cation pocket.

This sequence belongs to the KAE1 / TsaD family. Fe(2+) serves as cofactor.

It is found in the cytoplasm. The catalysed reaction is L-threonylcarbamoyladenylate + adenosine(37) in tRNA = N(6)-L-threonylcarbamoyladenosine(37) in tRNA + AMP + H(+). Its function is as follows. Required for the formation of a threonylcarbamoyl group on adenosine at position 37 (t(6)A37) in tRNAs that read codons beginning with adenine. Is involved in the transfer of the threonylcarbamoyl moiety of threonylcarbamoyl-AMP (TC-AMP) to the N6 group of A37, together with TsaE and TsaB. TsaD likely plays a direct catalytic role in this reaction. This Metamycoplasma arthritidis (strain 158L3-1) (Mycoplasma arthritidis) protein is tRNA N6-adenosine threonylcarbamoyltransferase.